The chain runs to 101 residues: Small ribosomal subunit protein uS14 (101 aa).

Belongs to the universal ribosomal protein uS14 family. In terms of assembly, part of the 30S ribosomal subunit. Contacts proteins S3 and S10.

In terms of biological role, binds 16S rRNA, required for the assembly of 30S particles and may also be responsible for determining the conformation of the 16S rRNA at the A site. The protein is Small ribosomal subunit protein uS14 of Psychrobacter arcticus (strain DSM 17307 / VKM B-2377 / 273-4).